The primary structure comprises 212 residues: Uridine kinase (212 aa).

Position 13–20 (13–20) interacts with ATP; that stretch reads GGSGSGKT.

The protein belongs to the uridine kinase family.

It localises to the cytoplasm. The catalysed reaction is uridine + ATP = UMP + ADP + H(+). It catalyses the reaction cytidine + ATP = CMP + ADP + H(+). Its pathway is pyrimidine metabolism; CTP biosynthesis via salvage pathway; CTP from cytidine: step 1/3. It participates in pyrimidine metabolism; UMP biosynthesis via salvage pathway; UMP from uridine: step 1/1. This is Uridine kinase from Bacillus mycoides (strain KBAB4) (Bacillus weihenstephanensis).